Consider the following 902-residue polypeptide: Transcription factor E2F7 (902 aa).

At S96 the chain carries Phosphoserine. The DNA-binding element occupies 143–212; the sequence is RKQKSLGLLC…VAKNQYGWHG (70 aa). Residues 253 to 269 are compositionally biased toward basic and acidic residues; sequence ERRKDGSPDPRDQHLLD. Positions 253–283 are disordered; sequence ERRKDGSPDPRDQHLLDFSESDYPSSSANSR. A DNA-binding region spans residues 283-368; the sequence is RKDKSLRIMS…GRKPAFKWIG (86 aa). The residue at position 411 (S411) is a Phosphoserine. 3 disordered regions span residues 418–439, 589–627, and 665–690; these read SEKI…KQGP, LCEE…SNST, and NGFI…DNEI. Composition is skewed to basic and acidic residues over residues 589 to 611 and 679 to 690; these read LCEE…REFE and PDTEKSSNDNEI. S832 is modified (phosphoserine). The segment at 844 to 902 is disordered; the sequence is KAEQSPAPATPKSIQRRHRETFFKTPGSLGDPAFRRERNQSRNTSSAQRRLEISSSGPD. Residues 884 to 902 are compositionally biased toward polar residues; the sequence is SRNTSSAQRRLEISSSGPD.

It belongs to the E2F/DP family. As to quaternary structure, homodimer and heterodimer: mainly forms homodimers and, to a lesser extent, heterodimers with E2F8. Dimerization is important for DNA-binding. Interacts with HIF1A. Interacts with MN1.

It is found in the nucleus. Its function is as follows. Atypical E2F transcription factor that participates in various processes such as angiogenesis, polyploidization of specialized cells and DNA damage response. Mainly acts as a transcription repressor that binds DNA independently of DP proteins and specifically recognizes the E2 recognition site 5'-TTTC[CG]CGC-3'. Directly represses transcription of classical E2F transcription factors such as E2F1. Acts as a regulator of S-phase by recognizing and binding the E2-related site 5'-TTCCCGCC-3' and mediating repression of G1/S-regulated genes. Plays a key role in polyploidization of cells in placenta and liver by regulating the endocycle, probably by repressing genes promoting cytokinesis and antagonizing action of classical E2F proteins (E2F1, E2F2 and/or E2F3). Required for placental development by promoting polyploidization of trophoblast giant cells. Also involved in DNA damage response: up-regulated by p53/TP53 following genotoxic stress and acts as a downstream effector of p53/TP53-dependent repression by mediating repression of indirect p53/TP53 target genes involved in DNA replication. Acts as a promoter of sprouting angiogenesis, possibly by acting as a transcription activator: associates with HIF1A, recognizes and binds the VEGFA promoter, which is different from canonical E2 recognition site, and activates expression of the VEGFA gene. Acts as a negative regulator of keratinocyte differentiation. The sequence is that of Transcription factor E2F7 (E2f7) from Rattus norvegicus (Rat).